Consider the following 438-residue polypeptide: Na(+)/H(+) antiporter NhaA (438 aa).

Transmembrane regions (helical) follow at residues 23-43 (FGGI…NSFL), 62-82 (FFIG…LFFL), 104-124 (SFPV…YFFL), 133-153 (GFGI…MLLG), 162-182 (VFLI…IALF), 185-205 (TNLK…LALL), 221-241 (VLLW…AVVL), 302-322 (FLAP…NAGV), 337-357 (FGVI…ITFI), 372-392 (WWHI…SMFI), and 410-430 (IAIL…LFAL).

This sequence belongs to the NhaA Na(+)/H(+) (TC 2.A.33) antiporter family.

It localises to the cell inner membrane. The enzyme catalyses Na(+)(in) + 2 H(+)(out) = Na(+)(out) + 2 H(+)(in). Its function is as follows. Na(+)/H(+) antiporter that extrudes sodium in exchange for external protons. In Helicobacter pylori (strain P12), this protein is Na(+)/H(+) antiporter NhaA.